Reading from the N-terminus, the 1033-residue chain is Immunoglobulin superfamily member 2 (1033 aa).

The N-terminal stretch at 1–20 (MACILCVASLFLSLTKFSIG) is a signal peptide. The Extracellular segment spans residues 21–970 (QREVKIQEGP…VSSLICSSGP (950 aa)). Ig-like C2-type domains follow at residues 22–141 (REVK…TNLT), 144–266 (PDTL…TLIT), 279–388 (PAAR…TQMG), 408–529 (PAAR…QKIS), 539–657 (LRVN…ARVS), 670–797 (PESK…RKTS), and 806–941 (PTGS…KWIN). Cysteine 43 and cysteine 121 are oxidised to a cystine. Asparagine 139 is a glycosylation site (N-linked (GlcNAc...) asparagine). Cysteine 168 and cysteine 249 are joined by a disulfide. The short motif at 253 to 255 (EWI) is the EWI motif element. Intrachain disulfides connect cysteine 304-cysteine 377, cysteine 432-cysteine 509, and cysteine 560-cysteine 638. An N-linked (GlcNAc...) asparagine glycan is attached at asparagine 677. Intrachain disulfides connect cysteine 695–cysteine 776 and cysteine 832–cysteine 925. Residues 971-991 (LLHFLIVCPFVMLLLLATSFL) traverse the membrane as a helical segment. Topologically, residues 992-1033 (CLYRKARKLSQLSLSAKKEKALWVGMRKTSLQKEAGEESGHY) are cytoplasmic.

In terms of processing, N-glycosylated.

It localises to the membrane. In terms of biological role, plays a role as inhibitor of T-cells proliferation induced by CD3. Inhibits expression of IL2RA on activated T-cells and secretion of IL2. Inhibits tyrosine kinases that are required for IL2 production and cellular proliferation. Inhibits phospholipase C-gamma-1/PLCG1 phosphorylation and subsequent CD3-induced changes in intracellular free calcium. Prevents nuclear translocation of nuclear factor of activated T-cell to the nucleus. Plays a role in the inhibition of T-cell proliferation via IL10 secretion by cutaneous dendritic cells. The chain is Immunoglobulin superfamily member 2 (Cd101) from Mus musculus (Mouse).